We begin with the raw amino-acid sequence, 431 residues long: Hydroxylamine reductase (431 aa).

Residues C5, C8, C17, and C23 each coordinate [4Fe-4S] cluster. Hybrid [4Fe-2O-2S] cluster contacts are provided by H131, E155, C199, C286, C314, C339, E373, and K375. A Cysteine persulfide modification is found at C286.

Belongs to the HCP family. The cofactor is [4Fe-4S] cluster. Hybrid [4Fe-2O-2S] cluster serves as cofactor.

The protein localises to the cytoplasm. It carries out the reaction A + NH4(+) + H2O = hydroxylamine + AH2 + H(+). In terms of biological role, catalyzes the reduction of hydroxylamine to form NH(3) and H(2)O. The polypeptide is Hydroxylamine reductase (Thermotoga petrophila (strain ATCC BAA-488 / DSM 13995 / JCM 10881 / RKU-1)).